The chain runs to 363 residues: Protein-arginine kinase (363 aa).

One can recognise a Phosphagen kinase C-terminal domain in the interval 24–255; it reads IVLSSRIRLA…QQLIAQERAA (232 aa). ATP-binding positions include 27 to 31, His92, Arg126, 177 to 181, and 208 to 213; these read SSRIR, RASVM, and RGTYGE. The RDXXRA motif of the pArg binding pocket involved in allosteric regulation signature appears at 338 to 343; that stretch reads RDVRRA.

Belongs to the ATP:guanido phosphotransferase family.

It carries out the reaction L-arginyl-[protein] + ATP = N(omega)-phospho-L-arginyl-[protein] + ADP + H(+). Appears to be allosterically activated by the binding of pArg-containing polypeptides to the pArg-binding pocket localized in the C-terminal domain of McsB. Catalyzes the specific phosphorylation of arginine residues in a large number of proteins. Is part of the bacterial stress response system. Protein arginine phosphorylation has a physiologically important role and is involved in the regulation of many critical cellular processes, such as protein homeostasis, motility, competence, and stringent and stress responses, by regulating gene expression and protein activity. The polypeptide is Protein-arginine kinase (Geobacillus thermodenitrificans (strain NG80-2)).